Here is an 86-residue protein sequence, read N- to C-terminus: Venom metalloproteinase (86 aa).

Asp7 is a binding site for Ca(2+). Residue His67 coordinates Zn(2+). Glu68 is an active-site residue. 2 residues coordinate Zn(2+): His71 and His77.

Belongs to the venom metalloproteinase (M12B) family. It depends on Zn(2+) as a cofactor. As to expression, expressed by the venom gland.

The protein resides in the secreted. The polypeptide is Venom metalloproteinase (Tityus serrulatus (Brazilian scorpion)).